Consider the following 558-residue polypeptide: MHHATPLITTIVGGLVLAFILGMLANKLRISPLVGYLLAGVLAGPFTPGFVADTKLAPELAELGVILLMFGVGLHFSLKDLMAVKAIAIPGAIAQIAVATLLGMALSAVLGWSLMTGIVFGLCLSTASTVVLLRALEERQLIDSQRGQIAIGWLIVEDLVMVLTLVLLPAVAGMMEQGDVGFATLAVDMGITIGKVIAFIAIMMLVGRRLVPWIMARSAATGSRELFTLSVLALALGVAFGAVELFDVSFALGAFFAGMVLNESELSHRAAHDTLPLRDAFAVLFFVSVGMLFDPLILIQQPLAVLATLAIILFGKSLAAFFLVRLFGHSQRTALTIAASLAQIGEFAFILAGLGMALNLLPQAGQNLVLAGAILSIMLNPVLFALLEKYLAKTETLEEQTLEEAIEEEKQIPVDICNHALLVGYGRVGSLLGEKLLASDIPLVVIETSRTRVDELRERGVRAVLGNAANEEIMQLAHLECAKWLILTIPNGYEAGEIVASARAKNPDIEIIARAHYDDEVAYITERGANQVVMGEREIARTMLELLETPPAGEVVTG.

Residues 1-3 lie on the Periplasmic side of the membrane; sequence MHH. The helical transmembrane segment at 4-24 threads the bilayer; the sequence is ATPLITTIVGGLVLAFILGML. Residues 25–31 are Cytoplasmic-facing; the sequence is ANKLRIS. Residues 32-52 form a helical membrane-spanning segment; that stretch reads PLVGYLLAGVLAGPFTPGFVA. Residues 53–55 are Periplasmic-facing; sequence DTK. A helical membrane pass occupies residues 56 to 76; the sequence is LAPELAELGVILLMFGVGLHF. Over 77–85 the chain is Cytoplasmic; that stretch reads SLKDLMAVK. A helical membrane pass occupies residues 86–106; that stretch reads AIAIPGAIAQIAVATLLGMAL. Topologically, residues 107-112 are periplasmic; sequence SAVLGW. A helical membrane pass occupies residues 113 to 133; that stretch reads SLMTGIVFGLCLSTASTVVLL. Residues 134-148 lie on the Cytoplasmic side of the membrane; sequence RALEERQLIDSQRGQ. Residues 149 to 169 form a helical membrane-spanning segment; sequence IAIGWLIVEDLVMVLTLVLLP. Topologically, residues 170-185 are periplasmic; the sequence is AVAGMMEQGDVGFATL. A helical transmembrane segment spans residues 186-206; that stretch reads AVDMGITIGKVIAFIAIMMLV. Over 207 to 225 the chain is Cytoplasmic; that stretch reads GRRLVPWIMARSAATGSRE. The helical transmembrane segment at 226–246 threads the bilayer; that stretch reads LFTLSVLALALGVAFGAVELF. A topological domain (periplasmic) is located at residue Asp-247. The helical transmembrane segment at 248 to 268 threads the bilayer; that stretch reads VSFALGAFFAGMVLNESELSH. Topologically, residues 269–279 are cytoplasmic; that stretch reads RAAHDTLPLRD. Residues 280 to 300 traverse the membrane as a helical segment; that stretch reads AFAVLFFVSVGMLFDPLILIQ. Over 301 to 303 the chain is Periplasmic; it reads QPL. A helical membrane pass occupies residues 304-324; that stretch reads AVLATLAIILFGKSLAAFFLV. Residues 325 to 336 lie on the Cytoplasmic side of the membrane; that stretch reads RLFGHSQRTALT. A helical membrane pass occupies residues 337–357; sequence IAASLAQIGEFAFILAGLGMA. Residues 358-367 are Periplasmic-facing; it reads LNLLPQAGQN. A helical transmembrane segment spans residues 368 to 388; that stretch reads LVLAGAILSIMLNPVLFALLE. Residues 389 to 558 are Cytoplasmic-facing; the sequence is KYLAKTETLE…TPPAGEVVTG (170 aa). Residues 417-534 form the RCK N-terminal domain; sequence CNHALLVGYG…TERGANQVVM (118 aa). AMP is bound by residues 427-428, 447-448, 467-468, Glu-494, and Arg-514; these read RV, ET, and NA.

This sequence belongs to the monovalent cation:proton antiporter 2 (CPA2) transporter (TC 2.A.37) family.

It localises to the cell inner membrane. This is Putative cation/proton antiporter YbaL (ybaL) from Escherichia coli (strain K12).